The sequence spans 223 residues: Deoxyribose-phosphate aldolase (223 aa).

Asp92 functions as the Proton donor/acceptor in the catalytic mechanism. Lys154 acts as the Schiff-base intermediate with acetaldehyde in catalysis. The active-site Proton donor/acceptor is the Lys182.

This sequence belongs to the DeoC/FbaB aldolase family. DeoC type 1 subfamily.

It localises to the cytoplasm. The catalysed reaction is 2-deoxy-D-ribose 5-phosphate = D-glyceraldehyde 3-phosphate + acetaldehyde. Its pathway is carbohydrate degradation; 2-deoxy-D-ribose 1-phosphate degradation; D-glyceraldehyde 3-phosphate and acetaldehyde from 2-deoxy-alpha-D-ribose 1-phosphate: step 2/2. Its function is as follows. Catalyzes a reversible aldol reaction between acetaldehyde and D-glyceraldehyde 3-phosphate to generate 2-deoxy-D-ribose 5-phosphate. This chain is Deoxyribose-phosphate aldolase, found in Haemophilus influenzae (strain ATCC 51907 / DSM 11121 / KW20 / Rd).